We begin with the raw amino-acid sequence, 90 residues long: Molybdopterin synthase sulfur carrier subunit (90 aa).

The residue at position 90 (G90) is a 1-thioglycine; alternate. At G90 the chain carries Glycyl adenylate; alternate.

The protein belongs to the MoaD family. MOCS2A subfamily. As to quaternary structure, heterotetramer; composed of 2 small (Mocs2A) and 2 large (Mocs2B) subunits. In terms of processing, C-terminal thiocarboxylation occurs in 2 steps, it is first acyl-adenylated (-COAMP) via the hesA/moeB/thiF part of MOCS3, then thiocarboxylated (-COSH) via the rhodanese domain of MOCS3.

It localises to the cytoplasm. It participates in cofactor biosynthesis; molybdopterin biosynthesis. Its function is as follows. Acts as a sulfur carrier required for molybdopterin biosynthesis. Component of the molybdopterin synthase complex that catalyzes the conversion of precursor Z into molybdopterin by mediating the incorporation of 2 sulfur atoms into precursor Z to generate a dithiolene group. In the complex, serves as sulfur donor by being thiocarboxylated (-COSH) at its C-terminus by MOCS3. After interaction with Mocs2B, the sulfur is then transferred to precursor Z to form molybdopterin. The polypeptide is Molybdopterin synthase sulfur carrier subunit (Drosophila erecta (Fruit fly)).